The primary structure comprises 259 residues: Factor V activator (259 aa).

The first 18 residues, 1-18 (MVLIRVLANLLVLQLSYA), serve as a signal peptide directing secretion. Residues 19–24 (QKSSEL) constitute a propeptide that is removed on maturation. Residues 25 to 251 (VVGGDECDIN…YTDWIQSIIA (227 aa)) form the Peptidase S1 domain. 6 disulfide bridges follow: Cys31–Cys165, Cys52–Cys68, Cys100–Cys258, Cys144–Cys212, Cys176–Cys191, and Cys202–Cys227. Residues His67 and Asp112 each act as charge relay system in the active site. Ser206 acts as the Charge relay system in catalysis. An N-linked (GlcNAc...) asparagine glycan is attached at Asn253.

This sequence belongs to the peptidase S1 family. Snake venom subfamily. Monomer. N-glycosylated. Contains 4.4% of hexoses, 4.4% of hexosamines and 3.1% of sialic acids. As to expression, expressed by the venom gland.

Its subcellular location is the secreted. It carries out the reaction Fully activates human clotting factor V by a single cleavage at the 1545-Trp-Tyr-Leu-Arg-|-Ser-Asn-Asn-Gly-1552 bond. Cattle, but not rabbit, factor V is cleaved, and no other proteins of the clotting system are attacked. Esterase activity is observed on Bz-Arg-OEt and Tos-Arg-OMe, and amidase activity on Phe-pipecolyl-Arg-NHPhNO2.. Its activity is regulated as follows. Inhibited by D-Phe-Pro-Arg-chloromethyl ketone (FPRCK) (98%), PMSF (93%), benzamidine (67%), and diisopropylfluorophosphate (DFP). Is not inhibited by BPTI, antithrombin and EDTA. Its function is as follows. Venom serine protease that converts factor V (F5) to the active form Va in the presence of calcium ions and phospholipids. It cleaves the Arg(1545)-Ser(1546) linkage in the human factor V molecule. Has hydrolytic activities against BAEE (1.2 U/mg), TAME, and Pro-Phe-Arg-MCA (4.9 U/mg). Shows coagulant activity. In Macrovipera lebetinus (Levantine viper), this protein is Factor V activator.